Here is a 460-residue protein sequence, read N- to C-terminus: UDP-glycosyltransferase 91C1 (460 aa).

Residues Thr-283, 335-337 (VPQ), 352-360 (HCGWNSVVE), and 374-377 (LNEQ) contribute to the UDP-alpha-D-glucose site.

This sequence belongs to the UDP-glycosyltransferase family.

This Arabidopsis thaliana (Mouse-ear cress) protein is UDP-glycosyltransferase 91C1 (UGT91C1).